The chain runs to 158 residues: NAD(P)H-quinone oxidoreductase subunit J, chloroplastic (158 aa).

Belongs to the complex I 30 kDa subunit family. NDH is composed of at least 16 different subunits, 5 of which are encoded in the nucleus.

It localises to the plastid. The protein resides in the chloroplast thylakoid membrane. The enzyme catalyses a plastoquinone + NADH + (n+1) H(+)(in) = a plastoquinol + NAD(+) + n H(+)(out). It catalyses the reaction a plastoquinone + NADPH + (n+1) H(+)(in) = a plastoquinol + NADP(+) + n H(+)(out). Functionally, NDH shuttles electrons from NAD(P)H:plastoquinone, via FMN and iron-sulfur (Fe-S) centers, to quinones in the photosynthetic chain and possibly in a chloroplast respiratory chain. The immediate electron acceptor for the enzyme in this species is believed to be plastoquinone. Couples the redox reaction to proton translocation, and thus conserves the redox energy in a proton gradient. This Crucihimalaya wallichii (Rock-cress) protein is NAD(P)H-quinone oxidoreductase subunit J, chloroplastic.